A 332-amino-acid polypeptide reads, in one-letter code: L-lactate dehydrogenase (332 aa).

Residues 29-57 (GQVG…CADK) and Arg99 each bind NAD(+). The substrate site is built by Arg106, Asn138, and Arg169. Asn138 is an NAD(+) binding site. The Proton acceptor role is filled by His193. A substrate-binding site is contributed by Thr248.

Belongs to the LDH/MDH superfamily. LDH family. Homotetramer.

Its subcellular location is the cytoplasm. It carries out the reaction (S)-lactate + NAD(+) = pyruvate + NADH + H(+). The protein operates within fermentation; pyruvate fermentation to lactate; (S)-lactate from pyruvate: step 1/1. This chain is L-lactate dehydrogenase, found in Drosophila melanogaster (Fruit fly).